Consider the following 332-residue polypeptide: T-cell surface glycoprotein CD1c2 (332 aa).

The signal sequence occupies residues methionine 1–isoleucine 17. At threonine 18–serine 300 the chain is on the extracellular side. N-linked (GlcNAc...) asparagine glycosylation is found at asparagine 25, asparagine 38, and asparagine 75. Cystine bridges form between cysteine 120-cysteine 184 and cysteine 224-cysteine 279. The Ig-like domain occupies proline 205–isoleucine 292. A helical transmembrane segment spans residues valine 301–leucine 321. The Cytoplasmic segment spans residues cysteine 322–proline 332.

As to quaternary structure, heterodimer with B2M (beta-2-microglobulin).

It is found in the cell membrane. Its subcellular location is the endosome membrane. Its function is as follows. Antigen-presenting protein that binds self and non-self lipid and glycolipid antigens and presents them to T-cell receptors on natural killer T-cells. This Cavia porcellus (Guinea pig) protein is T-cell surface glycoprotein CD1c2 (CD1C2).